The sequence spans 138 residues: ATP synthase epsilon chain (138 aa).

This sequence belongs to the ATPase epsilon chain family. In terms of assembly, F-type ATPases have 2 components, CF(1) - the catalytic core - and CF(0) - the membrane proton channel. CF(1) has five subunits: alpha(3), beta(3), gamma(1), delta(1), epsilon(1). CF(0) has three main subunits: a, b and c.

The protein resides in the cellular thylakoid membrane. In terms of biological role, produces ATP from ADP in the presence of a proton gradient across the membrane. The protein is ATP synthase epsilon chain of Cyanothece sp. (strain PCC 7425 / ATCC 29141).